A 276-amino-acid chain; its full sequence is Dermonecrotic toxin LlSicTox-alphaIV2iii (276 aa).

Residue His5 is part of the active site. Positions 25 and 27 each coordinate Mg(2+). The active-site Nucleophile is the His41. 2 cysteine pairs are disulfide-bonded: Cys45–Cys51 and Cys47–Cys193. Asp85 lines the Mg(2+) pocket.

This sequence belongs to the arthropod phospholipase D family. Class II subfamily. Mg(2+) is required as a cofactor. As to expression, expressed by the venom gland.

It is found in the secreted. It carries out the reaction an N-(acyl)-sphingosylphosphocholine = an N-(acyl)-sphingosyl-1,3-cyclic phosphate + choline. It catalyses the reaction an N-(acyl)-sphingosylphosphoethanolamine = an N-(acyl)-sphingosyl-1,3-cyclic phosphate + ethanolamine. The enzyme catalyses a 1-acyl-sn-glycero-3-phosphocholine = a 1-acyl-sn-glycero-2,3-cyclic phosphate + choline. The catalysed reaction is a 1-acyl-sn-glycero-3-phosphoethanolamine = a 1-acyl-sn-glycero-2,3-cyclic phosphate + ethanolamine. Functionally, dermonecrotic toxins cleave the phosphodiester linkage between the phosphate and headgroup of certain phospholipids (sphingolipid and lysolipid substrates), forming an alcohol (often choline) and a cyclic phosphate. This toxin acts on sphingomyelin (SM). It may also act on ceramide phosphoethanolamine (CPE), lysophosphatidylcholine (LPC) and lysophosphatidylethanolamine (LPE), but not on lysophosphatidylserine (LPS), and lysophosphatidylglycerol (LPG). It acts by transphosphatidylation, releasing exclusively cyclic phosphate products as second products. Induces dermonecrosis, hemolysis, increased vascular permeability, edema, inflammatory response, and platelet aggregation. The polypeptide is Dermonecrotic toxin LlSicTox-alphaIV2iii (Loxosceles laeta (South American recluse spider)).